Reading from the N-terminus, the 1104-residue chain is General transcription factor II-I repeat domain-containing protein 1 (1104 aa).

Residues Lys-27, Lys-184, Lys-212, Lys-225, Lys-238, Lys-271, Lys-337, Lys-436, Lys-439, and Lys-443 each participate in a glycyl lysine isopeptide (Lys-Gly) (interchain with G-Cter in SUMO2) cross-link. The stretch at 119–213 (LEQCSDVYLL…PDDGGQDTKA (95 aa)) is one GTF2I-like 1 repeat. The stretch at 342–436 (IKEMEDINTL…FDERIFTGNK (95 aa)) is one GTF2I-like 2 repeat. A Phosphoserine modification is found at Ser-448. The interval 509–559 (SDPSPTSEEMTDSLPGHLPSEDSGYGMEMPADKGPSEEPWSEERPAEESPG) is disordered. Residues 538–555 (PADKGPSEEPWSEERPAE) are compositionally biased toward basic and acidic residues. The stretch at 556-650 (ESPGDVIRPL…ELLTDGVKEP (95 aa)) is one GTF2I-like 3 repeat. Residues Lys-567, Lys-579, Lys-588, Lys-622, Lys-638, Lys-669, Lys-709, Lys-717, Lys-757, Lys-759, and Lys-772 each participate in a glycyl lysine isopeptide (Lys-Gly) (interchain with G-Cter in SUMO2) cross-link. The GTF2I-like 4 repeat unit spans residues 681–775 (LSRIDIANTL…FQGLIPKPET (95 aa)). A disordered region spans residues 783–802 (EAGKTTRPRRLQQDTWQPDE). The GTF2I-like 5 repeat unit spans residues 805–899 (ANRLGEKVIL…LQPFAEVCND (95 aa)). Glycyl lysine isopeptide (Lys-Gly) (interchain with G-Cter in SUMO2) cross-links involve residues Lys-841 and Lys-901. The stretch at 908–1002 (SNKLGKKVIL…LQPFGDVCNN (95 aa)) is one GTF2I-like 6 repeat. Disordered stretches follow at residues 1001–1044 (NNAK…VAST) and 1058–1104 (LHPN…LPTR). Residues 1012–1019 (PKRKRKRV) carry the Nuclear localization signal motif. The span at 1021–1043 (EGNSVSSSSSSSSSSSNPESVAS) shows a compositional bias: low complexity.

Belongs to the TFII-I family. In terms of assembly, interacts with the retinoblastoma protein (RB1) via its C-terminus. As to expression, widely expressed.

It is found in the nucleus. Its function is as follows. May be a transcription regulator involved in cell-cycle progression and skeletal muscle differentiation. May repress GTF2I transcriptional functions, by preventing its nuclear residency, or by inhibiting its transcriptional activation. May contribute to slow-twitch fiber type specificity during myogenesis and in regenerating muscles. Binds troponin I slow-muscle fiber enhancer (USE B1). Binds specifically and with high affinity to the EFG sequences derived from the early enhancer of HOXC8. The sequence is that of General transcription factor II-I repeat domain-containing protein 1 (Gtf2ird1) from Mus musculus (Mouse).